A 480-amino-acid polypeptide reads, in one-letter code: Protein nucleotidyltransferase YdiU (480 aa).

The ATP site is built by G86, G88, R89, K109, D121, G122, R172, and R179. D248 serves as the catalytic Proton acceptor. Mg(2+) contacts are provided by N249 and D258. D258 contacts ATP.

Belongs to the SELO family. Mg(2+) serves as cofactor. It depends on Mn(2+) as a cofactor.

The enzyme catalyses L-seryl-[protein] + ATP = 3-O-(5'-adenylyl)-L-seryl-[protein] + diphosphate. The catalysed reaction is L-threonyl-[protein] + ATP = 3-O-(5'-adenylyl)-L-threonyl-[protein] + diphosphate. It catalyses the reaction L-tyrosyl-[protein] + ATP = O-(5'-adenylyl)-L-tyrosyl-[protein] + diphosphate. It carries out the reaction L-histidyl-[protein] + UTP = N(tele)-(5'-uridylyl)-L-histidyl-[protein] + diphosphate. The enzyme catalyses L-seryl-[protein] + UTP = O-(5'-uridylyl)-L-seryl-[protein] + diphosphate. The catalysed reaction is L-tyrosyl-[protein] + UTP = O-(5'-uridylyl)-L-tyrosyl-[protein] + diphosphate. Functionally, nucleotidyltransferase involved in the post-translational modification of proteins. It can catalyze the addition of adenosine monophosphate (AMP) or uridine monophosphate (UMP) to a protein, resulting in modifications known as AMPylation and UMPylation. The polypeptide is Protein nucleotidyltransferase YdiU (Salmonella heidelberg (strain SL476)).